Reading from the N-terminus, the 462-residue chain is ATP synthase subunit beta (462 aa).

151–158 provides a ligand contact to ATP; it reads GGAGVGKT.

It belongs to the ATPase alpha/beta chains family. F-type ATPases have 2 components, CF(1) - the catalytic core - and CF(0) - the membrane proton channel. CF(1) has five subunits: alpha(3), beta(3), gamma(1), delta(1), epsilon(1). CF(0) has four main subunits: a(1), b(1), b'(1) and c(9-12).

Its subcellular location is the cell inner membrane. The enzyme catalyses ATP + H2O + 4 H(+)(in) = ADP + phosphate + 5 H(+)(out). Its function is as follows. Produces ATP from ADP in the presence of a proton gradient across the membrane. The catalytic sites are hosted primarily by the beta subunits. The sequence is that of ATP synthase subunit beta from Pelodictyon phaeoclathratiforme (strain DSM 5477 / BU-1).